The primary structure comprises 194 residues: Phosphoheptose isomerase (194 aa).

Positions 37 to 194 (IADTFKAGGK…LIEKEMVAQG (158 aa)) constitute an SIS domain. 52-54 (NGG) is a substrate binding site. Zn(2+) is bound by residues H61 and E65. Substrate is bound by residues E65, 93–94 (ND), 119–121 (STS), S124, and Q172. Q172 and H180 together coordinate Zn(2+).

The protein belongs to the SIS family. GmhA subfamily. Homotetramer. The cofactor is Zn(2+).

Its subcellular location is the cytoplasm. The catalysed reaction is 2 D-sedoheptulose 7-phosphate = D-glycero-alpha-D-manno-heptose 7-phosphate + D-glycero-beta-D-manno-heptose 7-phosphate. It participates in carbohydrate biosynthesis; D-glycero-D-manno-heptose 7-phosphate biosynthesis; D-glycero-alpha-D-manno-heptose 7-phosphate and D-glycero-beta-D-manno-heptose 7-phosphate from sedoheptulose 7-phosphate: step 1/1. Functionally, catalyzes the isomerization of sedoheptulose 7-phosphate in D-glycero-D-manno-heptose 7-phosphate. In Sodalis glossinidius (strain morsitans), this protein is Phosphoheptose isomerase.